Here is a 943-residue protein sequence, read N- to C-terminus: Isoleucine--tRNA ligase (943 aa).

Positions 58 to 68 (PYANGNIHIGH) match the 'HIGH' region motif. Residue glutamate 567 coordinates L-isoleucyl-5'-AMP. A 'KMSKS' region motif is present at residues 608-612 (KMSKS). An ATP-binding site is contributed by lysine 611. Residues cysteine 906, cysteine 909, cysteine 926, and cysteine 929 each coordinate Zn(2+).

This sequence belongs to the class-I aminoacyl-tRNA synthetase family. IleS type 1 subfamily. As to quaternary structure, monomer. It depends on Zn(2+) as a cofactor.

Its subcellular location is the cytoplasm. The catalysed reaction is tRNA(Ile) + L-isoleucine + ATP = L-isoleucyl-tRNA(Ile) + AMP + diphosphate. Catalyzes the attachment of isoleucine to tRNA(Ile). As IleRS can inadvertently accommodate and process structurally similar amino acids such as valine, to avoid such errors it has two additional distinct tRNA(Ile)-dependent editing activities. One activity is designated as 'pretransfer' editing and involves the hydrolysis of activated Val-AMP. The other activity is designated 'posttransfer' editing and involves deacylation of mischarged Val-tRNA(Ile). The polypeptide is Isoleucine--tRNA ligase (Pseudomonas savastanoi pv. phaseolicola (strain 1448A / Race 6) (Pseudomonas syringae pv. phaseolicola (strain 1448A / Race 6))).